The sequence spans 89 residues: Small ribosomal subunit protein uS15 (89 aa).

This sequence belongs to the universal ribosomal protein uS15 family. As to quaternary structure, part of the 30S ribosomal subunit. Forms a bridge to the 50S subunit in the 70S ribosome, contacting the 23S rRNA.

One of the primary rRNA binding proteins, it binds directly to 16S rRNA where it helps nucleate assembly of the platform of the 30S subunit by binding and bridging several RNA helices of the 16S rRNA. Its function is as follows. Forms an intersubunit bridge (bridge B4) with the 23S rRNA of the 50S subunit in the ribosome. The protein is Small ribosomal subunit protein uS15 of Exiguobacterium sibiricum (strain DSM 17290 / CCUG 55495 / CIP 109462 / JCM 13490 / 255-15).